The sequence spans 171 residues: MLKLRDYIRDIPDFPKKGVVFKDITTALKDPELLAEIIINLSSHYEKEVPDKIVGIESRGFILGPAIAKELGAGFVPARKGGKLPSKTASQEYNTEYSTDVLEIHEDAIEKNERVLIVDDLLATGGTAQATAKIVEQLEGQVVGFAFMLELSFLKGREKIGDYPIKVLEQF.

This sequence belongs to the purine/pyrimidine phosphoribosyltransferase family. As to quaternary structure, homodimer.

The protein resides in the cytoplasm. The enzyme catalyses AMP + diphosphate = 5-phospho-alpha-D-ribose 1-diphosphate + adenine. Its pathway is purine metabolism; AMP biosynthesis via salvage pathway; AMP from adenine: step 1/1. Functionally, catalyzes a salvage reaction resulting in the formation of AMP, that is energically less costly than de novo synthesis. This is Adenine phosphoribosyltransferase from Natranaerobius thermophilus (strain ATCC BAA-1301 / DSM 18059 / JW/NM-WN-LF).